A 520-amino-acid chain; its full sequence is tRNA-2-methylthio-N(6)-dimethylallyladenosine synthase (520 aa).

Residues 77–195 enclose the MTTase N-terminal domain; the sequence is KKFLIRTYGC…LPHLLRDAIF (119 aa). [4Fe-4S] cluster is bound by residues C86, C122, C156, C232, C236, and C239. Residues 218-448 enclose the Radical SAM core domain; that stretch reads RKNKTQAWVN…ALVNDISNKR (231 aa). The TRAM domain occupies 450-513; that stretch reads LDYQDKIVEV…TWSLDGEIVS (64 aa).

This sequence belongs to the methylthiotransferase family. MiaB subfamily. In terms of assembly, monomer. The cofactor is [4Fe-4S] cluster.

The protein localises to the cytoplasm. The enzyme catalyses N(6)-dimethylallyladenosine(37) in tRNA + (sulfur carrier)-SH + AH2 + 2 S-adenosyl-L-methionine = 2-methylsulfanyl-N(6)-dimethylallyladenosine(37) in tRNA + (sulfur carrier)-H + 5'-deoxyadenosine + L-methionine + A + S-adenosyl-L-homocysteine + 2 H(+). Functionally, catalyzes the methylthiolation of N6-(dimethylallyl)adenosine (i(6)A), leading to the formation of 2-methylthio-N6-(dimethylallyl)adenosine (ms(2)i(6)A) at position 37 in tRNAs that read codons beginning with uridine. The sequence is that of tRNA-2-methylthio-N(6)-dimethylallyladenosine synthase from Shouchella clausii (strain KSM-K16) (Alkalihalobacillus clausii).